A 211-amino-acid polypeptide reads, in one-letter code: ATP phosphoribosyltransferase (211 aa).

The protein belongs to the ATP phosphoribosyltransferase family. Short subfamily. In terms of assembly, heteromultimer composed of HisG and HisZ subunits.

The protein localises to the cytoplasm. The enzyme catalyses 1-(5-phospho-beta-D-ribosyl)-ATP + diphosphate = 5-phospho-alpha-D-ribose 1-diphosphate + ATP. It functions in the pathway amino-acid biosynthesis; L-histidine biosynthesis; L-histidine from 5-phospho-alpha-D-ribose 1-diphosphate: step 1/9. Functionally, catalyzes the condensation of ATP and 5-phosphoribose 1-diphosphate to form N'-(5'-phosphoribosyl)-ATP (PR-ATP). Has a crucial role in the pathway because the rate of histidine biosynthesis seems to be controlled primarily by regulation of HisG enzymatic activity. The polypeptide is ATP phosphoribosyltransferase (Clostridium botulinum (strain 657 / Type Ba4)).